A 1375-amino-acid chain; its full sequence is DNA-directed RNA polymerase subunit beta (1375 aa).

This sequence belongs to the RNA polymerase beta chain family. In terms of assembly, the RNAP catalytic core consists of 2 alpha, 1 beta, 1 beta' and 1 omega subunit. When a sigma factor is associated with the core the holoenzyme is formed, which can initiate transcription.

The enzyme catalyses RNA(n) + a ribonucleoside 5'-triphosphate = RNA(n+1) + diphosphate. Functionally, DNA-dependent RNA polymerase catalyzes the transcription of DNA into RNA using the four ribonucleoside triphosphates as substrates. The chain is DNA-directed RNA polymerase subunit beta from Methylibium petroleiphilum (strain ATCC BAA-1232 / LMG 22953 / PM1).